Consider the following 314-residue polypeptide: N-alpha-acetyltransferase 80 (314 aa).

The N-acetyltransferase domain occupies 90 to 243; that stretch reads LEPVHCRPEL…TTVLRAFSKP (154 aa). Residues Arg113 and 118 to 121 contribute to the substrate site; that span reads RLHS. Acetyl-CoA contacts are provided by residues 169–171, 177–182, and Gln207; these read VVV and GRGFGR. Residues 260–295 form a disordered region; the sequence is VPRSSKGPPLPPPPPLPQSLTASPPPSPEPLPQSPL. The segment covering 267–292 has biased composition (pro residues); it reads PPLPPPPPLPQSLTASPPPSPEPLPQ.

Belongs to the acetyltransferase family.

It localises to the cytoplasm. Its subcellular location is the cytosol. The enzyme catalyses N-terminal L-aspartyl-L-aspartyl-L-aspartyl-[protein] + acetyl-CoA = N-terminal N-acetyl-L-aspartyl-L-aspartyl-L-aspartyl-[protein] + CoA + H(+). It carries out the reaction N-terminal L-glutamyl-L-glutamyl-L-glutamyl-[protein] + acetyl-CoA = N-terminal N-acetyl-L-glutamyl-L-glutamyl-L-glutamyl-[protein] + CoA + H(+). Its function is as follows. N-alpha-acetyltransferase that specifically mediates the acetylation of the acidic amino terminus of processed forms of beta- and gamma-actin (ACTB and ACTG, respectively). N-terminal acetylation of processed beta- and gamma-actin regulates actin filament depolymerization and elongation. In vivo, preferentially displays N-terminal acetyltransferase activity towards acid N-terminal sequences starting with Asp-Asp-Asp and Glu-Glu-Glu. In vitro, shows high activity towards Met-Asp-Glu-Leu and Met-Asp-Asp-Asp. May act as a tumor suppressor. The protein is N-alpha-acetyltransferase 80 of Mus musculus (Mouse).